The following is a 471-amino-acid chain: ATP synthase subunit beta, chloroplastic (471 aa).

151-158 (GGAGVGKT) is an ATP binding site.

This sequence belongs to the ATPase alpha/beta chains family. As to quaternary structure, F-type ATPases have 2 components, CF(1) - the catalytic core - and CF(0) - the membrane proton channel. CF(1) has five subunits: alpha(3), beta(3), gamma(1), delta(1), epsilon(1). CF(0) has four main subunits: a(1), b(1), b'(1) and c(9-12).

The protein resides in the plastid. It is found in the chloroplast thylakoid membrane. It catalyses the reaction ATP + H2O + 4 H(+)(in) = ADP + phosphate + 5 H(+)(out). Produces ATP from ADP in the presence of a proton gradient across the membrane. The catalytic sites are hosted primarily by the beta subunits. The protein is ATP synthase subunit beta, chloroplastic of Rhodomonas salina (Cryptomonas salina).